The sequence spans 91 residues: Antifungal protein opdH (91 aa).

Residues 1–18 form the signal peptide; it reads MQFSSLSLVFLAVIGAIA. Residues 19–33 constitute a propeptide that is removed on maturation; it reads NPIAVDSELENRDVQ. 3 disulfide bridges follow: cysteine 41/cysteine 69, cysteine 48/cysteine 76, and cysteine 61/cysteine 87.

Belongs to the antifungal protein pafB family.

The protein localises to the secreted. Its subcellular location is the host cytoplasm. Antifungal protein; part of the gene cluster that mediates the biosynthesis of oxopyrrolidines, polyketide-amino acid hybrid compounds with feature structures of tetramic acid. Acts as an inhibitor of growth of various molds and yeasts. The sequence is that of Antifungal protein opdH from Penicillium oxalicum (strain 114-2 / CGMCC 5302) (Penicillium decumbens).